The following is a 516-amino-acid chain: Exoglucanase 1 (516 aa).

The signal sequence occupies residues 1–17 (MRASLLAFSLAAAVAGG). Residues 18 to 445 (QQAGTLTAKR…GHLGISPFSG (428 aa)) are catalytic. Asn45 carries N-linked (GlcNAc...) asparagine glycosylation. Residue Glu223 is the Nucleophile of the active site. The active-site Proton donor is the Glu228. A glycan (N-linked (GlcNAc...) asparagine) is linked at Asn281. Residues 444–481 (SGGSSGTPPSNPSSSASPTSSTAKPSSTSTASNPSGTG) form a disordered region. Residues 446–480 (GSSGTPPSNPSSSASPTSSTAKPSSTSTASNPSGT) are linker. Residues 449–481 (GTPPSNPSSSASPTSSTAKPSSTSTASNPSGTG) show a composition bias toward low complexity. Positions 480–516 (TGAAHWAQCGGIGFSGPTTCPEPYTCAKDHDIYSQCV) constitute a CBM1 domain. Disulfide bonds link Cys488/Cys505 and Cys499/Cys515.

It belongs to the glycosyl hydrolase 7 (cellulase C) family.

The protein resides in the secreted. It carries out the reaction Hydrolysis of (1-&gt;4)-beta-D-glucosidic linkages in cellulose and cellotetraose, releasing cellobiose from the non-reducing ends of the chains.. The polypeptide is Exoglucanase 1 (cbh-1) (Neurospora crassa (strain ATCC 24698 / 74-OR23-1A / CBS 708.71 / DSM 1257 / FGSC 987)).